The sequence spans 311 residues: Taste receptor type 2 member 40 (311 aa).

Over 1-9 the chain is Extracellular; the sequence is MSSLFSSFC. Residues 10-30 traverse the membrane as a helical segment; sequence LVIAIFESVVGLLGNGTIVAV. Topologically, residues 31–55 are cytoplasmic; it reads SSTSCIRSKILSSYDVIVIFLSLSR. Residues 56 to 76 form a helical membrane-spanning segment; the sequence is FFLQLWMILDFLLIFFCQPSY. Topologically, residues 77 to 87 are extracellular; the sequence is YEENLFVTFKT. The chain crosses the membrane as a helical span at residues 88–108; sequence VFIFLNSYSFWFAAWLSVFYC. Residues 109–128 lie on the Cytoplasmic side of the membrane; the sequence is VKVASFTQSFLSWLKQRIAS. The helical transmembrane segment at 129 to 149 threads the bilayer; that stretch reads LIPWMLITSSLFSFATSLPFF. Residues 150–178 lie on the Extracellular side of the membrane; it reads WDSYNAHSNFTTPLTMTNSSKRITTRKTN. The helical transmembrane segment at 179-199 threads the bilayer; that stretch reads LIFLILLCNVGIALPSIMLVF. Over 200–235 the chain is Cytoplasmic; that stretch reads SSILLIRSLWRHTRQMQNNATGFRDPSLEALIGAIK. Residues 236-256 traverse the membrane as a helical segment; that stretch reads TVFSFLLLYITNFIALILILS. The Extracellular segment spans residues 257 to 266; it reads DTFVPLSTEE. The chain crosses the membrane as a helical span at residues 267-287; that stretch reads AICVVVVAACPAGQSMVLIWS. The Cytoplasmic segment spans residues 288 to 311; sequence NPRFRELLSSILHYVNSCVRARCS.

This sequence belongs to the G-protein coupled receptor T2R family. In terms of tissue distribution, expressed in the oral cavity, as well as in the gastrointestinal tract, including in the upper palate, tongue, proventriculus, ventriculus, duodenum, jejunum, ileum, cecum and colon.

Its subcellular location is the cell membrane. Functionally, bitter taste receptor. Binds quinine, dextromethorphan, diphenhydramine, diphenidol, chlorpheniramine, diphenidol, chloramphenicol, chloroquine and coumarin, this latter being a weak agonist, as well as epiquinidine, ethylhydrocupreine and quinidine. This is Taste receptor type 2 member 40 (TAS2R40) from Gallus gallus (Chicken).